The primary structure comprises 499 residues: Terpentedienyl-diphosphate synthase (499 aa).

Positions 284 and 286 each coordinate Mg(2+). The short motif at 284–287 (DGDD) is the DXDD motif element.

This sequence belongs to the terpene synthase family. In terms of assembly, monomer. Mg(2+) is required as a cofactor.

It catalyses the reaction (2E,6E,10E)-geranylgeranyl diphosphate = terpentedienyl diphosphate. The protein operates within antibiotic biosynthesis. Involved in the production of the isoprenoid antibiotic terpentecin. Converts geranylgeranyl diphosphate (GGDP) into terpentedienol diphosphate (TDP) by a protonation-initiated cyclization. The chain is Terpentedienyl-diphosphate synthase (cyc1) from Kitasatospora griseola (Streptomyces griseolosporeus).